The following is a 111-amino-acid chain: Disintegrin DS-AN (111 aa).

The signal sequence occupies residues 1 to 20; that stretch reads MIQVLLVIICLAVFPYQGSC. The propeptide occupies 21-47; it reads IILESGNVNDYEIVYPKKLIVLPTGAM. The region spanning 47–111 is the Disintegrin domain; it reads MNSPHPCCDP…PDCPRNPYKD (65 aa). 4 cysteine pairs are disulfide-bonded: C53–C76, C67–C73, C72–C97, and C85–C104. The short motif at 89–91 is the Cell attachment site element; the sequence is RGD.

Heterodimer; disulfide-linked.

It is found in the secreted. In terms of biological role, inhibits ADP-induced platelet aggregation in human platelet-rich plasma (IC(50) is 8 uM). The chain is Disintegrin DS-AN from Atheris nitschei (Great lakes bush viper).